Here is a 517-residue protein sequence, read N- to C-terminus: Probable cytosol aminopeptidase (517 aa).

Mn(2+)-binding residues include K279 and D284. K291 is a catalytic residue. D302, D361, and E363 together coordinate Mn(2+). R365 is an active-site residue.

This sequence belongs to the peptidase M17 family. Requires Mn(2+) as cofactor.

Its subcellular location is the cytoplasm. The enzyme catalyses Release of an N-terminal amino acid, Xaa-|-Yaa-, in which Xaa is preferably Leu, but may be other amino acids including Pro although not Arg or Lys, and Yaa may be Pro. Amino acid amides and methyl esters are also readily hydrolyzed, but rates on arylamides are exceedingly low.. The catalysed reaction is Release of an N-terminal amino acid, preferentially leucine, but not glutamic or aspartic acids.. Its function is as follows. Presumably involved in the processing and regular turnover of intracellular proteins. Catalyzes the removal of unsubstituted N-terminal amino acids from various peptides. This is Probable cytosol aminopeptidase from Streptomyces coelicolor (strain ATCC BAA-471 / A3(2) / M145).